The chain runs to 323 residues: Galactosylgalactosylxylosylprotein 3-beta-glucuronosyltransferase 2 (323 aa).

The Cytoplasmic segment spans residues 1 to 2; that stretch reads MK. The helical; Signal-anchor for type II membrane protein transmembrane segment at 3 to 23 threads the bilayer; that stretch reads SALFTRFFILLPWILIVIIML. The Lumenal segment spans residues 24 to 323; that stretch reads DVDTRRPVPP…YHLDTVKIEV (300 aa). The interval 51 to 80 is disordered; the sequence is RLPLRRGGPAHGTQKRNQSRPQPQPEPQLP. N67 is a glycosylation site (N-linked (GlcNAc...) asparagine). UDP-alpha-D-glucuronate-binding positions include 87-89, D118, R155, R160, and 185-187; these read PTY and DDD. Mn(2+) is bound at residue D187. The segment at 234 to 243 is interaction with galactose moiety of substrate glycoprotein; sequence WRADRPFAID. E273 serves as the catalytic Proton donor/acceptor. N-linked (GlcNAc...) asparagine glycosylation is present at N292. 300–302 serves as a coordination point for UDP-alpha-D-glucuronate; sequence HTR.

This sequence belongs to the glycosyltransferase 43 family. Homodimer. Requires Mn(2+) as cofactor. Expressed in the trachea, retina, spinal cord, hippocampus and other brain regions, and, at lower levels, in testis and ovary.

The protein resides in the golgi apparatus membrane. The enzyme catalyses 3-O-(beta-D-galactosyl-(1-&gt;3)-beta-D-galactosyl-(1-&gt;4)-beta-D-xylosyl)-L-seryl-[protein] + UDP-alpha-D-glucuronate = 3-O-(beta-D-GlcA-(1-&gt;3)-beta-D-Gal-(1-&gt;3)-beta-D-Gal-(1-&gt;4)-beta-D-Xyl)-L-seryl-[protein] + UDP + H(+). Its pathway is protein modification; protein glycosylation. Involved in the biosynthesis of L2/HNK-1 carbohydrate epitope on both glycolipids and glycoproteins. This chain is Galactosylgalactosylxylosylprotein 3-beta-glucuronosyltransferase 2 (B3GAT2), found in Homo sapiens (Human).